A 588-amino-acid chain; its full sequence is L-fucose isomerase (588 aa).

Residues Glu335 and Asp359 each act as proton acceptor in the active site. Mn(2+) is bound by residues Glu335, Asp359, and His525.

It belongs to the L-fucose isomerase family. It depends on Mn(2+) as a cofactor.

The protein resides in the cytoplasm. The catalysed reaction is L-fucose = L-fuculose. Its pathway is carbohydrate degradation; L-fucose degradation; L-lactaldehyde and glycerone phosphate from L-fucose: step 1/3. Functionally, converts the aldose L-fucose into the corresponding ketose L-fuculose. This is L-fucose isomerase from Streptococcus pneumoniae (strain ATCC 700669 / Spain 23F-1).